Here is a 201-residue protein sequence, read N- to C-terminus: 3-isopropylmalate dehydratase small subunit (201 aa).

It belongs to the LeuD family. LeuD type 1 subfamily. Heterodimer of LeuC and LeuD.

The enzyme catalyses (2R,3S)-3-isopropylmalate = (2S)-2-isopropylmalate. It functions in the pathway amino-acid biosynthesis; L-leucine biosynthesis; L-leucine from 3-methyl-2-oxobutanoate: step 2/4. Its function is as follows. Catalyzes the isomerization between 2-isopropylmalate and 3-isopropylmalate, via the formation of 2-isopropylmaleate. In Cytophaga hutchinsonii (strain ATCC 33406 / DSM 1761 / CIP 103989 / NBRC 15051 / NCIMB 9469 / D465), this protein is 3-isopropylmalate dehydratase small subunit.